We begin with the raw amino-acid sequence, 369 residues long: Methylthioribose-1-phosphate isomerase (369 aa).

Met1 bears the N-acetylmethionine mark. Arg158 is subject to Omega-N-methylarginine. Asp248 acts as the Proton donor in catalysis. Ser366 carries the phosphoserine modification.

The protein belongs to the eIF-2B alpha/beta/delta subunits family. MtnA subfamily.

Its subcellular location is the cytoplasm. The protein localises to the nucleus. The enzyme catalyses 5-(methylsulfanyl)-alpha-D-ribose 1-phosphate = 5-(methylsulfanyl)-D-ribulose 1-phosphate. Its pathway is amino-acid biosynthesis; L-methionine biosynthesis via salvage pathway; L-methionine from S-methyl-5-thio-alpha-D-ribose 1-phosphate: step 1/6. Functionally, catalyzes the interconversion of methylthioribose-1-phosphate (MTR-1-P) into methylthioribulose-1-phosphate (MTRu-1-P). The sequence is that of Methylthioribose-1-phosphate isomerase (Mri1) from Mus musculus (Mouse).